The chain runs to 736 residues: Polyphosphate kinase (736 aa).

Asparagine 91 contacts ATP. Mg(2+) is bound by residues arginine 421 and arginine 451. The active-site Phosphohistidine intermediate is the histidine 481. ATP contacts are provided by tyrosine 514, arginine 610, and histidine 638.

The protein belongs to the polyphosphate kinase 1 (PPK1) family. Mg(2+) is required as a cofactor. Post-translationally, an intermediate of this reaction is the autophosphorylated ppk in which a phosphate is covalently linked to a histidine residue through a N-P bond.

The catalysed reaction is [phosphate](n) + ATP = [phosphate](n+1) + ADP. Its function is as follows. Catalyzes the reversible transfer of the terminal phosphate of ATP to form a long-chain polyphosphate (polyP). The protein is Polyphosphate kinase of Pseudomonas syringae pv. tomato (strain ATCC BAA-871 / DC3000).